The sequence spans 479 residues: Deoxyribodipyrimidine photo-lyase (479 aa).

The Photolyase/cryptochrome alpha/beta domain maps to 6 to 132 (APVIVWFRKD…TVRSFSGQLL (127 aa)). An FAD-binding site is contributed by tyrosine 226. A DNA-binding site is contributed by arginine 230. Residues 238–242 (TSLLS) and 277–284 (EIVWREFC) contribute to the FAD site. Interaction with DNA stretches follow at residues 277 to 284 (EIVWREFC) and 343 to 344 (NR). An FAD-binding site is contributed by 374–376 (DAD). Glutamine 406 is a binding site for DNA.

Belongs to the DNA photolyase class-3 family. FAD serves as cofactor. (6R)-5,10-methylene-5,6,7,8-tetrahydrofolate is required as a cofactor.

It catalyses the reaction cyclobutadipyrimidine (in DNA) = 2 pyrimidine residues (in DNA).. In terms of biological role, photolyase involved in the repair of UV radiation-induced DNA damage. By using blue-light energy, catalyzes the photoreactivation of cyclobutane pyrimidine dimers (CPDs), which are formed between adjacent bases on the same DNA strand upon exposure to ultraviolet radiation. Can repair CPD lesions in ssDNA as well as in dsDNA. This is Deoxyribodipyrimidine photo-lyase from Agrobacterium fabrum (strain C58 / ATCC 33970) (Agrobacterium tumefaciens (strain C58)).